The following is a 72-amino-acid chain: Translation initiation factor IF-1 (72 aa).

Residues 1–72 enclose the S1-like domain; that stretch reads MAKDDVIEVE…TRGRITYRYK (72 aa). Phosphotyrosine is present on Y60.

Belongs to the IF-1 family. As to quaternary structure, component of the 30S ribosomal translation pre-initiation complex which assembles on the 30S ribosome in the order IF-2 and IF-3, IF-1 and N-formylmethionyl-tRNA(fMet); mRNA recruitment can occur at any time during PIC assembly.

The protein resides in the cytoplasm. Functionally, one of the essential components for the initiation of protein synthesis. Stabilizes the binding of IF-2 and IF-3 on the 30S subunit to which N-formylmethionyl-tRNA(fMet) subsequently binds. Helps modulate mRNA selection, yielding the 30S pre-initiation complex (PIC). Upon addition of the 50S ribosomal subunit IF-1, IF-2 and IF-3 are released leaving the mature 70S translation initiation complex. This Geobacillus thermodenitrificans (strain NG80-2) protein is Translation initiation factor IF-1.